A 252-amino-acid polypeptide reads, in one-letter code: 2-succinyl-6-hydroxy-2,4-cyclohexadiene-1-carboxylate synthase (252 aa).

It belongs to the AB hydrolase superfamily. MenH family. Monomer.

The catalysed reaction is 5-enolpyruvoyl-6-hydroxy-2-succinyl-cyclohex-3-ene-1-carboxylate = (1R,6R)-6-hydroxy-2-succinyl-cyclohexa-2,4-diene-1-carboxylate + pyruvate. It participates in quinol/quinone metabolism; 1,4-dihydroxy-2-naphthoate biosynthesis; 1,4-dihydroxy-2-naphthoate from chorismate: step 3/7. Its pathway is quinol/quinone metabolism; menaquinone biosynthesis. In terms of biological role, catalyzes a proton abstraction reaction that results in 2,5-elimination of pyruvate from 2-succinyl-5-enolpyruvyl-6-hydroxy-3-cyclohexene-1-carboxylate (SEPHCHC) and the formation of 2-succinyl-6-hydroxy-2,4-cyclohexadiene-1-carboxylate (SHCHC). The protein is 2-succinyl-6-hydroxy-2,4-cyclohexadiene-1-carboxylate synthase of Citrobacter koseri (strain ATCC BAA-895 / CDC 4225-83 / SGSC4696).